The following is a 626-amino-acid chain: Chaperone protein HtpG (626 aa).

The a; substrate-binding stretch occupies residues 1–341 (METKQFKAES…SEDLSLNISR (341 aa)). The segment at 342 to 552 (EILQHDRQLK…EGELSIEMEK (211 aa)) is b. The disordered stretch occupies residues 490-509 (DLGIEGEEKENTSNSDDKEN). Positions 498 to 509 (KENTSNSDDKEN) are enriched in basic and acidic residues. The c stretch occupies residues 553–626 (VLNAMPNNQN…FTNNICKIMK (74 aa)).

Belongs to the heat shock protein 90 family. As to quaternary structure, homodimer.

It is found in the cytoplasm. Molecular chaperone. Has ATPase activity. The polypeptide is Chaperone protein HtpG (Clostridium botulinum (strain ATCC 19397 / Type A)).